We begin with the raw amino-acid sequence, 955 residues long: E3 ubiquitin-protein ligase MIB2 (955 aa).

Position 1 is an N-acetylmethionine (M1). An MIB/HERC2 1 domain is found at 1–80; the sequence is MDPDPQAGVQ…AHDLLLYDNA (80 aa). A ZZ-type zinc finger spans residues 86 to 138; that stretch reads HPNIICDCCKKHGLRGMRWKCRVCLDYDLCTQCYMHNKHELAHAFDRYETAHS. 8 residues coordinate Zn(2+): C91, C94, C106, C109, C115, C118, H124, and H128. The region spanning 149 to 227 is the MIB/HERC2 2 domain; that stretch reads LPRIPLRGIF…KVDLKCVGEA (79 aa). S251 bears the Phosphoserine mark. 9 ANK repeats span residues 464 to 493, 497 to 526, 530 to 559, 563 to 595, 599 to 628, 633 to 663, 667 to 696, 700 to 728, and 769 to 798; these read QGRT…GVDL, EGNT…RADA, TQST…DVNL, HSDT…DVTA, QGFT…QLVD, DGFT…DVNV, KLQS…SVNA, EGDT…DPGP, and RGRS…ERQA. RING-type zinc fingers lie at residues 832-867 and 911-944; these read CLVC…IRCQ and CPIC…PICR.

Interacts with actin monomer. Post-translationally, ubiquitinated. Possibly via autoubiquitination. In terms of tissue distribution, expressed in skeletal muscle, and to a lesser extent in heart, brain and kidney.

It localises to the cytoplasm. Its subcellular location is the endosome. It carries out the reaction S-ubiquitinyl-[E2 ubiquitin-conjugating enzyme]-L-cysteine + [acceptor protein]-L-lysine = [E2 ubiquitin-conjugating enzyme]-L-cysteine + N(6)-ubiquitinyl-[acceptor protein]-L-lysine.. It participates in protein modification; protein ubiquitination. Functionally, E3 ubiquitin-protein ligase that mediates ubiquitination of Delta receptors, which act as ligands of Notch proteins. Positively regulates the Delta-mediated Notch signaling by ubiquitinating the intracellular domain of Delta, leading to endocytosis of Delta receptors. In Homo sapiens (Human), this protein is E3 ubiquitin-protein ligase MIB2.